The chain runs to 494 residues: UDP-N-acetylmuramoyl-L-alanyl-D-glutamate--L-lysine ligase (494 aa).

Serine 30 contacts UDP-N-acetyl-alpha-D-muramoyl-L-alanyl-D-glutamate. 110–116 (GTNGKTS) contributes to the ATP binding site. UDP-N-acetyl-alpha-D-muramoyl-L-alanyl-D-glutamate contacts are provided by residues 152–153 (TT), serine 179, and arginine 187. An N6-carboxylysine modification is found at lysine 219. An L-lysine recognition motif motif is present at residues 406–409 (DNPA).

It belongs to the MurCDEF family. MurE subfamily. Post-translationally, carboxylation is probably crucial for Mg(2+) binding and, consequently, for the gamma-phosphate positioning of ATP.

The protein resides in the cytoplasm. The catalysed reaction is UDP-N-acetyl-alpha-D-muramoyl-L-alanyl-D-glutamate + L-lysine + ATP = UDP-N-acetyl-alpha-D-muramoyl-L-alanyl-gamma-D-glutamyl-L-lysine + ADP + phosphate + H(+). The protein operates within cell wall biogenesis; peptidoglycan biosynthesis. Functionally, catalyzes the addition of L-lysine to the nucleotide precursor UDP-N-acetylmuramoyl-L-alanyl-D-glutamate (UMAG) in the biosynthesis of bacterial cell-wall peptidoglycan. The polypeptide is UDP-N-acetylmuramoyl-L-alanyl-D-glutamate--L-lysine ligase (Staphylococcus aureus (strain MW2)).